Consider the following 506-residue polypeptide: Steroid (22S)-hydroxylase (506 aa).

A helical membrane pass occupies residues 12–32 (LLFFLPFILLALLTFYTTTVA). Residue Cys449 coordinates heme.

It belongs to the cytochrome P450 family. Heme serves as cofactor. Highly expressed in roots and leaf blades. Expressed in shoot apex, stems, leaf sheaths, inflorescences and flowers.

It localises to the membrane. The enzyme catalyses a C28-steroid + reduced [NADPH--hemoprotein reductase] + O2 = a (22S)-22-hydroxy C28-steroid + oxidized [NADPH--hemoprotein reductase] + H2O + H(+). The catalysed reaction is campesterol + reduced [NADPH--hemoprotein reductase] + O2 = (22S)-22-hydroxycampesterol + oxidized [NADPH--hemoprotein reductase] + H2O + H(+). It catalyses the reaction campestanol + reduced [NADPH--hemoprotein reductase] + O2 = 6-deoxycathasterone + oxidized [NADPH--hemoprotein reductase] + H2O + H(+). It functions in the pathway plant hormone biosynthesis; brassinosteroid biosynthesis. Its function is as follows. Catalyzes the C22-alpha-hydroxylation step in brassinosteroid biosynthesis, which is the rate-limiting step in this biosynthetic pathway. Catalyzes the conversion of campesterol (CR) to (22S)-22-hydroxycampesterol (22-OHCR, 22-hydroxyCR) and of campestanol (CN) to 6-deoxycathasterone (6-deoxoCT). Required for auxin responses involved in the regulation of epidermal cells length of the lamina joint. This is Steroid (22S)-hydroxylase from Oryza sativa subsp. japonica (Rice).